The sequence spans 78 residues: Alpha-neurotoxin homolog 7 (78 aa).

The signal sequence occupies residues 1-21 (MKTLLLTLVVVTIVCLDFGYT). 4 cysteine pairs are disulfide-bonded: cysteine 24-cysteine 42, cysteine 37-cysteine 57, cysteine 59-cysteine 70, and cysteine 71-cysteine 76.

This sequence belongs to the three-finger toxin family. Short-chain subfamily. Orphan group XII sub-subfamily. In terms of tissue distribution, expressed by the venom gland.

The protein localises to the secreted. This chain is Alpha-neurotoxin homolog 7, found in Micrurus corallinus (Brazilian coral snake).